The sequence spans 176 residues: Nascent polypeptide-associated complex subunit alpha (176 aa).

The region spanning 16–80 (PKNEKKAREL…AKVDDMNQRI (65 aa)) is the NAC-A/B domain. Residues 83-110 (AQAAQAAETDAHAGHTHSHGEEDKSPEA) form a disordered region. The span at 91-110 (TDAHAGHTHSHGEEDKSPEA) shows a compositional bias: basic and acidic residues. Residues 138 to 175 (LDAKDIDIIVEQTQVSRAKAVKALRKHDGDMVNAIMEL) form the UBA domain.

This sequence belongs to the NAC-alpha family. In terms of assembly, part of the nascent polypeptide-associated complex (NAC), consisting of EGD2 and EGD1. NAC associates with ribosomes via EGD1.

Its subcellular location is the cytoplasm. The protein localises to the nucleus. In terms of biological role, component of the nascent polypeptide-associated complex (NAC), a dynamic component of the ribosomal exit tunnel, protecting the emerging polypeptides from interaction with other cytoplasmic proteins to ensure appropriate nascent protein targeting. The NAC complex also promotes mitochondrial protein import by enhancing productive ribosome interactions with the outer mitochondrial membrane and blocks the inappropriate interaction of ribosomes translating non-secretory nascent polypeptides with translocation sites in the membrane of the endoplasmic reticulum. EGD2 may also be involved in transcription regulation. The sequence is that of Nascent polypeptide-associated complex subunit alpha (EGD2) from Scheffersomyces stipitis (strain ATCC 58785 / CBS 6054 / NBRC 10063 / NRRL Y-11545) (Yeast).